The following is a 374-amino-acid chain: Phosphomevalonate kinase (374 aa).

Belongs to the GHMP kinase family. As to quaternary structure, homodimer. Mg(2+) is required as a cofactor.

It carries out the reaction (R)-5-phosphomevalonate + ATP = (R)-5-diphosphomevalonate + ADP. The protein operates within isoprenoid biosynthesis; isopentenyl diphosphate biosynthesis via mevalonate pathway; isopentenyl diphosphate from (R)-mevalonate: step 2/3. Its function is as follows. Catalyzes the phosphorylation of (R)-mevalonate 5-phosphate (MVAP) to (R)-mevalonate 5-diphosphate (MVAPP). Functions in the mevalonate (MVA) pathway leading to isopentenyl diphosphate (IPP), a key precursor for the biosynthesis of isoprenoid compounds. The protein is Phosphomevalonate kinase of Streptomyces sp. (strain CL190).